The primary structure comprises 254 residues: uncharacterized protein (254 aa).

Belongs to the MtxX family.

This is an uncharacterized protein from Methanopyrus kandleri (strain AV19 / DSM 6324 / JCM 9639 / NBRC 100938).